The sequence spans 311 residues: Methionyl-tRNA formyltransferase (311 aa).

Ser-110–Pro-113 provides a ligand contact to (6S)-5,6,7,8-tetrahydrofolate.

It belongs to the Fmt family.

The enzyme catalyses L-methionyl-tRNA(fMet) + (6R)-10-formyltetrahydrofolate = N-formyl-L-methionyl-tRNA(fMet) + (6S)-5,6,7,8-tetrahydrofolate + H(+). Its function is as follows. Attaches a formyl group to the free amino group of methionyl-tRNA(fMet). The formyl group appears to play a dual role in the initiator identity of N-formylmethionyl-tRNA by promoting its recognition by IF2 and preventing the misappropriation of this tRNA by the elongation apparatus. The sequence is that of Methionyl-tRNA formyltransferase from Acidobacterium capsulatum (strain ATCC 51196 / DSM 11244 / BCRC 80197 / JCM 7670 / NBRC 15755 / NCIMB 13165 / 161).